Reading from the N-terminus, the 449-residue chain is UDP-glycosyltransferase 74F2 (449 aa).

Residues Ser273, 325-327, 342-350, and 364-367 contribute to the UDP-alpha-D-glucose site; these read SPQ, HCGWNSTME, and WTDQ.

This sequence belongs to the UDP-glycosyltransferase family. In terms of tissue distribution, expressed in seedlings.

Functionally, glycosyltransferase that glucosylates benzoic acid and derivatives. Substrate preference is benzoic acid &gt; salicylic acid (SA) &gt; 3-hydroxybenzoic acid &gt; 4-hydroxybenzoic acid. Catalyzes the formation of both SA 2-O-beta-D-glucoside (SAG) and SA glucose ester (SGE). Has high affinity for the tryptophan precursor anthranilate. Catalyzes the formation of anthranilate glucose ester. Is the major source of this activity in the plant. The protein is UDP-glycosyltransferase 74F2 (UGT74F2) of Arabidopsis thaliana (Mouse-ear cress).